The primary structure comprises 450 residues: Tubulin alpha-3 chain (450 aa).

7 residues coordinate GTP: Gln-11, Glu-71, Gly-144, Thr-145, Thr-179, Asn-206, and Asn-228. Residue Glu-71 coordinates Mg(2+). Glu-254 is a catalytic residue.

This sequence belongs to the tubulin family. As to quaternary structure, dimer of alpha and beta chains. A typical microtubule is a hollow water-filled tube with an outer diameter of 25 nm and an inner diameter of 15 nM. Alpha-beta heterodimers associate head-to-tail to form protofilaments running lengthwise along the microtubule wall with the beta-tubulin subunit facing the microtubule plus end conferring a structural polarity. Microtubules usually have 13 protofilaments but different protofilament numbers can be found in some organisms and specialized cells. The cofactor is Mg(2+). Post-translationally, undergoes a tyrosination/detyrosination cycle, the cyclic removal and re-addition of a C-terminal tyrosine residue by the enzymes tubulin tyrosine carboxypeptidase (TTCP) and tubulin tyrosine ligase (TTL), respectively.

The protein resides in the cytoplasm. Its subcellular location is the cytoskeleton. The enzyme catalyses GTP + H2O = GDP + phosphate + H(+). Tubulin is the major constituent of microtubules, a cylinder consisting of laterally associated linear protofilaments composed of alpha- and beta-tubulin heterodimers. Microtubules grow by the addition of GTP-tubulin dimers to the microtubule end, where a stabilizing cap forms. Below the cap, tubulin dimers are in GDP-bound state, owing to GTPase activity of alpha-tubulin. The sequence is that of Tubulin alpha-3 chain (TUBA3) from Eleusine indica (Goosegrass).